Reading from the N-terminus, the 114-residue chain is Protein D2 (114 aa).

This sequence belongs to the phosphatidylethanolamine-binding protein family.

This is Protein D2 (D2) from Onchocerca volvulus.